Here is a 121-residue protein sequence, read N- to C-terminus: Large ribosomal subunit protein uL14c (121 aa).

It belongs to the universal ribosomal protein uL14 family. In terms of assembly, part of the 50S ribosomal subunit.

It is found in the plastid. The protein localises to the chloroplast. In terms of biological role, binds to 23S rRNA. This chain is Large ribosomal subunit protein uL14c, found in Trieres chinensis (Marine centric diatom).